A 161-amino-acid chain; its full sequence is Phosphopantetheine adenylyltransferase (161 aa).

Position 10 (threonine 10) interacts with substrate. ATP contacts are provided by residues 10–11 and histidine 18; that span reads TF. Residues lysine 42, leucine 74, and arginine 88 each contribute to the substrate site. ATP contacts are provided by residues 89–91, glutamate 99, and 124–130; these read GLR and NSFISST.

It belongs to the bacterial CoaD family. In terms of assembly, homohexamer. It depends on Mg(2+) as a cofactor.

Its subcellular location is the cytoplasm. It catalyses the reaction (R)-4'-phosphopantetheine + ATP + H(+) = 3'-dephospho-CoA + diphosphate. It functions in the pathway cofactor biosynthesis; coenzyme A biosynthesis; CoA from (R)-pantothenate: step 4/5. Functionally, reversibly transfers an adenylyl group from ATP to 4'-phosphopantetheine, yielding dephospho-CoA (dPCoA) and pyrophosphate. This Photobacterium profundum (strain SS9) protein is Phosphopantetheine adenylyltransferase.